The sequence spans 483 residues: MLDNRPIPADPNEWRCEDVGNWLKKIGMAKYADLIAMKHKVDGKCLLALTDTDLKDPPVSINCLGDIKKILFAIEFLSQKVVEIGNSGVHHRSTPNGNGPSLKNSKDGLLVEYNEQNHLSISGEDVYTTTRRAEIVEDEETLLDTLAKSSDGTSTVQLISREEIIRQVERPDTYFKSVAKLLIAFAYSSLSFLMTSFVMVLVHDRVPDTKTYPPLPDIVLDNVPHIPWAFDMCETIGLVLAVVWFTVLFFHNQRVIVARRMFSLLGTVFLLRCFTMLITSLSVPGIHLQCEARPNTTMQEKLHKAFHIWSNLGMSLHGVRSCGDYMFSGHTTVITMISHFITEYTPADWTGLHTFTWVLNCFAIFLILAAHEHYSIDVFIAFYISSRMFLYYHAYAYNHAGITATDYRMRTWFPLGWFFEYGSQGKVENEFSLPINIRIPRRVFFAKSEEPKITPKSDSSRKRSSVVAAKQNGNSKNHTKKHN.

The next 3 membrane-spanning stretches (helical) occupy residues 182-202 (LIAF…MVLV), 230-250 (FDMC…VLFF), and 261-281 (MFSL…ITSL). His330 is an active-site residue. Residues 349–369 (WTGLHTFTWVLNCFAIFLILA) traverse the membrane as a helical segment. Active-site residues include His373 and Asp377. The chain crosses the membrane as a helical span at residues 376-396 (IDVFIAFYISSRMFLYYHAYA). The Cytoplasmic portion of the chain corresponds to 397 to 483 (YNHAGITATD…NSKNHTKKHN (87 aa)). The segment covering 450–461 (EPKITPKSDSSR) has biased composition (basic and acidic residues). Residues 450 to 483 (EPKITPKSDSSRKRSSVVAAKQNGNSKNHTKKHN) are disordered.

This sequence belongs to the sphingomyelin synthase family.

Its subcellular location is the membrane. The chain is Sphingomyelin synthase-related 1 from Caenorhabditis elegans.